An 88-amino-acid polypeptide reads, in one-letter code: UPF0298 protein Bcer98_2635 (88 aa).

This sequence belongs to the UPF0298 family.

It is found in the cytoplasm. The chain is UPF0298 protein Bcer98_2635 from Bacillus cytotoxicus (strain DSM 22905 / CIP 110041 / 391-98 / NVH 391-98).